Reading from the N-terminus, the 400-residue chain is Protein transport protein HofC homolog (400 aa).

The next 3 membrane-spanning stretches (helical) occupy residues 165 to 185 (YPII…HFVL), 209 to 229 (LADF…LLAI), and 370 to 390 (LLII…LPIF).

Belongs to the GSP F family.

It is found in the cell inner membrane. This is Protein transport protein HofC homolog (hofC) from Escherichia coli (strain K12).